The following is a 418-amino-acid chain: Elongation factor 1-gamma 2 (418 aa).

A GST N-terminal domain is found at 1–82; the sequence is MALVLHAGSG…YVTRSKADNP (82 aa). Residues 87–215 form the GST C-terminal domain; it reads SLIEYAHIEQ…VKQAESVPPV (129 aa). A disordered region spans residues 210–265; sequence ESVPPVQKKAPPPKEQKPKEAKKEAPKEAPKPKAVEKPEEEEEAPKPKPKNPLDLL. Over residues 221–246 the composition is skewed to basic and acidic residues; the sequence is PPKEQKPKEAKKEAPKEAPKPKAVEK. The EF-1-gamma C-terminal domain occupies 258–418; the sequence is PKNPLDLLPP…ESLLDAKCFK (161 aa).

EF-1 is composed of four subunits: alpha, beta, delta, and gamma.

Its function is as follows. Probably plays a role in anchoring the complex to other cellular components. The polypeptide is Elongation factor 1-gamma 2 (Oryza sativa subsp. japonica (Rice)).